A 306-amino-acid polypeptide reads, in one-letter code: MALKHFLQFNDLNADELAHIFERTRWIKEQFKAYQQYWPLTDRTLVMIFEKASTRTRLSFEAGMQQLGGSAIYLNTRDSQLGRGEPVEDAAQVISRMSDIVMIRTFEQEIIERFAANSRVPVINGLTNEYHPCQILADIFTYIEHRGSIKGKTVAWIGDSNNVCNTWLQAAEVLDFNVHVSTPPGYEVEPERANLYGTDHYEEFTDPMEAARGADLVTTDVWTSMGFEAENEERRRDFHDWQVDADMMRVAGKDALFMHCLPAHRGEEVTADVIDGAQSVVWDEAENRLHVQKALMEYLLLGKVQV.

Carbamoyl phosphate contacts are provided by residues 53 to 56 (STRT), Gln-80, Arg-104, and 131 to 134 (HPCQ). Residues Asn-162, Asp-220, and 224–225 (SM) each bind L-ornithine. Carbamoyl phosphate is bound by residues 260 to 261 (CL) and Arg-288.

This sequence belongs to the aspartate/ornithine carbamoyltransferase superfamily. OTCase family.

The protein localises to the cytoplasm. It catalyses the reaction carbamoyl phosphate + L-ornithine = L-citrulline + phosphate + H(+). Its pathway is amino-acid biosynthesis; L-arginine biosynthesis; L-arginine from L-ornithine and carbamoyl phosphate: step 1/3. In terms of biological role, reversibly catalyzes the transfer of the carbamoyl group from carbamoyl phosphate (CP) to the N(epsilon) atom of ornithine (ORN) to produce L-citrulline. This chain is Ornithine carbamoyltransferase, found in Methylobacillus flagellatus (strain ATCC 51484 / DSM 6875 / VKM B-1610 / KT).